The primary structure comprises 211 residues: Thiamine-phosphate synthase (211 aa).

4-amino-2-methyl-5-(diphosphooxymethyl)pyrimidine contacts are provided by residues 37–41 and N69; that span reads QLRIK. 2 residues coordinate Mg(2+): D70 and D89. A 4-amino-2-methyl-5-(diphosphooxymethyl)pyrimidine-binding site is contributed by S108. Residue 134 to 136 participates in 2-[(2R,5Z)-2-carboxy-4-methylthiazol-5(2H)-ylidene]ethyl phosphate binding; that stretch reads TQT. K137 provides a ligand contact to 4-amino-2-methyl-5-(diphosphooxymethyl)pyrimidine. 2-[(2R,5Z)-2-carboxy-4-methylthiazol-5(2H)-ylidene]ethyl phosphate contacts are provided by residues G166 and 186 to 187; that span reads VS.

Belongs to the thiamine-phosphate synthase family. Mg(2+) serves as cofactor.

It catalyses the reaction 2-[(2R,5Z)-2-carboxy-4-methylthiazol-5(2H)-ylidene]ethyl phosphate + 4-amino-2-methyl-5-(diphosphooxymethyl)pyrimidine + 2 H(+) = thiamine phosphate + CO2 + diphosphate. The enzyme catalyses 2-(2-carboxy-4-methylthiazol-5-yl)ethyl phosphate + 4-amino-2-methyl-5-(diphosphooxymethyl)pyrimidine + 2 H(+) = thiamine phosphate + CO2 + diphosphate. It carries out the reaction 4-methyl-5-(2-phosphooxyethyl)-thiazole + 4-amino-2-methyl-5-(diphosphooxymethyl)pyrimidine + H(+) = thiamine phosphate + diphosphate. The protein operates within cofactor biosynthesis; thiamine diphosphate biosynthesis; thiamine phosphate from 4-amino-2-methyl-5-diphosphomethylpyrimidine and 4-methyl-5-(2-phosphoethyl)-thiazole: step 1/1. Its function is as follows. Condenses 4-methyl-5-(beta-hydroxyethyl)thiazole monophosphate (THZ-P) and 2-methyl-4-amino-5-hydroxymethyl pyrimidine pyrophosphate (HMP-PP) to form thiamine monophosphate (TMP). The polypeptide is Thiamine-phosphate synthase (Escherichia coli O9:H4 (strain HS)).